The chain runs to 103 residues: Small ribosomal subunit protein uS10 (103 aa).

It belongs to the universal ribosomal protein uS10 family. Part of the 30S ribosomal subunit.

Its function is as follows. Involved in the binding of tRNA to the ribosomes. The polypeptide is Small ribosomal subunit protein uS10 (Alcanivorax borkumensis (strain ATCC 700651 / DSM 11573 / NCIMB 13689 / SK2)).